The following is a 424-amino-acid chain: Probable threonylcarbamoyladenosine tRNA methylthiotransferase (424 aa).

The region spanning 1–106 is the MTTase N-terminal domain; that stretch reads MRVAIETYGC…VVDAVYSALN (106 aa). [4Fe-4S] cluster contacts are provided by C10, C44, C73, C143, C147, and C150. The region spanning 129–359 is the Radical SAM core domain; sequence LRENAIAIVS…TDLMRKIGLE (231 aa). Residues 362 to 420 form the TRAM domain; that stretch reads KRFVGKKLRVLVTKEGKNGRNLARMNSYRAVVTEGAVGEFVEVKIKDCRFNYLIGQLAA.

It belongs to the methylthiotransferase family. CDKAL1 subfamily. [4Fe-4S] cluster is required as a cofactor.

It catalyses the reaction N(6)-L-threonylcarbamoyladenosine(37) in tRNA + (sulfur carrier)-SH + AH2 + 2 S-adenosyl-L-methionine = 2-methylsulfanyl-N(6)-L-threonylcarbamoyladenosine(37) in tRNA + (sulfur carrier)-H + 5'-deoxyadenosine + L-methionine + A + S-adenosyl-L-homocysteine + 2 H(+). In terms of biological role, catalyzes the methylthiolation of N6-threonylcarbamoyladenosine (t(6)A), leading to the formation of 2-methylthio-N6-threonylcarbamoyladenosine (ms(2)t(6)A) at position 37 in tRNAs that read codons beginning with adenine. The chain is Probable threonylcarbamoyladenosine tRNA methylthiotransferase from Archaeoglobus fulgidus (strain ATCC 49558 / DSM 4304 / JCM 9628 / NBRC 100126 / VC-16).